Consider the following 231-residue polypeptide: uncharacterized protein (231 aa).

Positions 1–19 are cleaved as a signal peptide; that stretch reads MKFKFLLTPLLSSVLFLSA. Cys-20 carries N-palmitoyl cysteine lipidation. A lipid anchor (S-diacylglycerol cysteine) is attached at Cys-20.

Belongs to the MG439/MG440 family.

The protein localises to the cell membrane. This is an uncharacterized protein from Mycoplasma pneumoniae (strain ATCC 29342 / M129 / Subtype 1) (Mycoplasmoides pneumoniae).